The chain runs to 435 residues: Salicylate hydroxylase (435 aa).

12–41 contributes to the FAD binding site; the sequence is RVAIVGGGISGLALALSLCKHSHLNVQLFE.

FAD serves as cofactor.

The catalysed reaction is salicylate + NADH + O2 + 2 H(+) = catechol + CO2 + NAD(+) + H2O. Its pathway is aromatic compound metabolism; naphthalene degradation. The chain is Salicylate hydroxylase (nahG) from Pseudomonas putida (Arthrobacter siderocapsulatus).